The sequence spans 296 residues: Aspartate carbamoyltransferase catalytic subunit (296 aa).

Carbamoyl phosphate is bound by residues R50 and T51. An L-aspartate-binding site is contributed by K79. 3 residues coordinate carbamoyl phosphate: R100, H128, and Q131. Residues R161 and R219 each coordinate L-aspartate. Carbamoyl phosphate is bound by residues L258 and P259.

Belongs to the aspartate/ornithine carbamoyltransferase superfamily. ATCase family. Heterooligomer of catalytic and regulatory chains.

It catalyses the reaction carbamoyl phosphate + L-aspartate = N-carbamoyl-L-aspartate + phosphate + H(+). Its pathway is pyrimidine metabolism; UMP biosynthesis via de novo pathway; (S)-dihydroorotate from bicarbonate: step 2/3. In terms of biological role, catalyzes the condensation of carbamoyl phosphate and aspartate to form carbamoyl aspartate and inorganic phosphate, the committed step in the de novo pyrimidine nucleotide biosynthesis pathway. The sequence is that of Aspartate carbamoyltransferase catalytic subunit from Korarchaeum cryptofilum (strain OPF8).